The following is a 481-amino-acid chain: Alkaline protease secretion protein AprF (481 aa).

Positions 462–481 are disordered; sequence PAPLHTLSKTDTEENRSALN. Positions 469 to 481 are enriched in basic and acidic residues; that stretch reads SKTDTEENRSALN.

The protein belongs to the outer membrane factor (OMF) (TC 1.B.17) family.

Its subcellular location is the cell outer membrane. Involved in the secretion of alkaline protease. The protein is Alkaline protease secretion protein AprF (aprF) of Pseudomonas aeruginosa (strain ATCC 15692 / DSM 22644 / CIP 104116 / JCM 14847 / LMG 12228 / 1C / PRS 101 / PAO1).